Here is a 507-residue protein sequence, read N- to C-terminus: MRHPVDMPEKVGTDAKRLFAQPEHLWELTLTEASALVRHRRITSRQLVEAWLSRIADFSELNAFISVDAAAALKQADSYDHYLEAGGDPLPLGGVPIAVKDNIQVVGFANTAGTPALSKFFPTCNARVIEPLLKAGAIVVGKTNMHELAFGTSGYNTAYHIPGVIGVRNAFDHSCIAGGSSSGSGTAVGALLIPAALGTDTGGSVRQPGAVNGCVGFRPTVGRYPVDGITPISPTRDTPGPIARSVEDIVLLDSIITGALPAEVPAAESIRLGVVDQLWADLSEPVRKLTEDALRKLEQQGVQIVRVSMSEIFEMSHAVSMPLALHECRSALTEYLSANETGVSFDELVAGISSPDVRTIFEDYILPGRLGELEGQSVDLEQAYATAMKDARPKLIQSFEFLFKEHQLDAIIHPTTPDLAIKSNPAATSFEAFARMIRNADPASNAGMPGISLPAGLSQQEGLPVGIEIEGLPGSDARLLSIANFIESILGRGPTPTRSGVESKISM.

Residues Lys-100 and Ser-180 each act as charge relay system in the active site. Catalysis depends on Ser-204, which acts as the Acyl-ester intermediate.

In terms of assembly, monomer.

The catalysed reaction is (R)-mandelamide + H2O = (R)-mandelate + NH4(+). With respect to regulation, inhibited by 3,4-dichloroisocoumarin and PMSF. Functionally, hydrolyzes both the R- and the S-enantiomers of mandelamide, and phenylacetamide. Has lower activity on 3-phenylpropionaide and lactamide. Does not hydrolyze benzamide. Hydrolyzes esters and amides with little steric bulk. Preferentially hydrolyzes aromatic substrates. The sequence is that of Mandelamide hydrolase from Pseudomonas putida (Arthrobacter siderocapsulatus).